Reading from the N-terminus, the 2227-residue chain is Genome polyprotein (2227 aa).

Short sequence motifs ((L)YPX(n)L motif) lie at residues 167–171 (YPHGL) and 200–205 (YPVWEL). The involved in P1-2A pentamerization stretch occupies residues 766–836 (MMSRIAAGDL…PRKMKGLFSQ (71 aa)). The chain crosses the membrane as a helical span at residues 1010 to 1030 (VTVEIINTVLCFVKSGILLYV). The segment at 1043–1070 (IGLLRVMNYADIGCSVISCGKVFSKMLE) is membrane-penetrating ability. A coiled-coil region spans residues 1127-1152 (KKKDVLNVLKDNQQKIERAIEEADNF). The SF3 helicase domain occupies 1204 to 1366 (HQKLKNLGSI…SFFKNPHNDM (163 aa)). 1230–1237 (GKRGGGKS) contributes to the ATP binding site. The helical transmembrane segment at 1462–1482 (WVAVGAAVGILGVLVGGWFVY) threads the bilayer. Tyrosine 1499 carries the O-(5'-phospho-RNA)-tyrosine modification. In terms of domain architecture, Peptidase C3 spans 1514–1728 (DPVESQSTLE…VAKLVTQEMF (215 aa)). Residues histidine 1563, aspartate 1603, and cysteine 1691 each act as for protease 3C activity in the active site. The region spanning 1976–2097 (DVGLDLDFSA…VFSRDIQIDN (122 aa)) is the RdRp catalytic domain. Aspartate 2083 (for RdRp activity) is an active-site residue.

Belongs to the picornaviridae polyprotein family. Homodimer. Homomultimer; probably interacts with membranes in a multimeric form. Seems to assemble into amyloid-like fibers. As to quaternary structure, homodimer. Monomer. Interacts with protein 3CD. In terms of assembly, interacts with host ACBD3. Interacts with protein 3AB. As to quaternary structure, interacts with human MAVS. In terms of assembly, homodimer; disulfide-linked. Homopentamer. Homooligomer. As to quaternary structure, interacts with capsid protein VP2. Interacts with capsid protein VP3. In terms of assembly, interacts with capsid protein VP1. Interacts with capsid protein VP3. Interacts with capsid protein VP1. Interacts with capsid protein VP2. Post-translationally, specific enzymatic cleavages by viral protease in vivo yield a variety of precursors and mature proteins. Polyprotein processing intermediates are produced, such as P1-2A which is a functional precursor of the structural proteins, VP0 which is a VP4-VP2 precursor, VP1-2A precursor, 3ABC precursor which is a stable and catalytically active precursor of 3A, 3B and 3C proteins, 3AB and 3CD precursors. The assembly signal 2A is removed from VP1-2A by a host protease, possibly host Cathepsin L. This cleavage occurs over a region of 3 amino-acids probably generating VP1 proteins with heterogeneous C-termini. During virion maturation, immature virions are rendered infectious following cleavage of VP0 into VP4 and VP2. This maturation seems to be an autocatalytic event triggered by the presence of RNA in the capsid and is followed by a conformational change of the particle. In terms of processing, the assembly signal 2A is removed from VP1-2A by a host protease, possibly host Cathepsin L in naked virions. This cleavage does not occur in enveloped virions. This cleavage occurs over a region of 3 amino-acids probably generating VP1 proteins with heterogeneous C-termini. Post-translationally, VPg is uridylylated prior to priming replication into VPg-pUpU. Unlike other picornaviruses, does not seem to be myristoylated.

It is found in the virion. The protein localises to the host endosome. It localises to the host multivesicular body. The protein resides in the host membrane. Its subcellular location is the host mitochondrion outer membrane. It is found in the host cytoplasm. The protein localises to the host cytoplasmic vesicle membrane. It catalyses the reaction RNA(n) + a ribonucleoside 5'-triphosphate = RNA(n+1) + diphosphate. It carries out the reaction a ribonucleoside 5'-triphosphate + H2O = a ribonucleoside 5'-diphosphate + phosphate + H(+). The enzyme catalyses Selective cleavage of Gln-|-Gly bond in the poliovirus polyprotein. In other picornavirus reactions Glu may be substituted for Gln, and Ser or Thr for Gly.. Capsid proteins VP1, VP2, and VP3 form a closed capsid enclosing the viral positive strand RNA genome. All these proteins contain a beta-sheet structure called beta-barrel jelly roll. Together they form an icosahedral capsid (T=3) composed of 60 copies of each VP1, VP2, and VP3, with a diameter of approximately 300 Angstroms. VP1 is situated at the 12 fivefold axes, whereas VP2 and VP3 are located at the quasi-sixfold axes. The naked capsid interacts with the host receptor HAVCR1 to provide virion attachment to and probably entry into the target cell. Functionally, VP0 precursor is a component of the immature procapsids. Its function is as follows. Plays a role in the assembly of the 12 pentamers into an icosahedral structure. Has not been detected in mature virions, supposedly owing to its small size. In terms of biological role, precursor component of immature procapsids that corresponds to an extended form of the structural protein VP1. After maturation, possibly by the host Cathepsin L, the assembly signal 2A is cleaved to give rise to the mature VP1 protein. Functions as a viroporin. Affects membrane integrity and causes an increase in membrane permeability. Involved in host intracellular membrane rearrangements probably to give rise to the viral factories. Does not disrupt calcium homeostasis or glycoprotein trafficking. Antagonizes the innate immune response of the host by suppressing IFN-beta synthesis, which it achieves by interfering with the RIG-I/IFIH1 pathway. Functionally, affects membrane integrity and causes an increase in membrane permeability. Its function is as follows. Associates with and induces structural rearrangements of intracellular membranes. Displays RNA-binding activity. In terms of biological role, the precursor 3ABC is targeted to the mitochondrial membrane where protease 3C activity cleaves and inhibits the host antiviral protein MAVS, thereby disrupting activation of IRF3 through the IFIH1/MDA5 pathway. In vivo, the protease activity of 3ABC precursor is more efficient in cleaving the 2BC precursor than that of protein 3C. The 3ABC precursor may therefore play a role in the proteolytic processing of the polyprotein. Possible viroporin. Interacts with the 3CD precursor and with RNA structures found at both the 5'- and 3'-termini of the viral genome. Since the 3AB precursor contains the hydrophobic domain 3A, it probably anchors the whole viral replicase complex to intracellular membranes on which viral RNA synthesis occurs. Functionally, may serve as membrane anchor to the 3AB and 3ABC precursors via its hydrophobic domain. May interact with RNA. Its function is as follows. Acts as a primer for viral RNA replication and remains covalently bound to viral genomic RNA. VPg is uridylylated prior to priming replication into VPg-pUpU. The VPg-pUpU is then used as primer on the genomic RNA poly(A) by the RNA-dependent RNA polymerase to replicate the viral genome. In terms of biological role, cysteine protease that generates mature viral proteins from the precursor polyprotein. In addition to its proteolytic activity, it binds to viral RNA, and thus influences viral genome replication. RNA and substrate bind cooperatively to the protease. Cleaves IKBKG/NEMO to impair innate immune signaling. Cleaves host PABPC1 which may participate in the switch of viral translation to RNA synthesis. Interacts with the 3AB precursor and with RNA structures found at both the 5'- and 3'-termini of the viral genome. Disrupts TLR3 signaling by degrading the host adapter protein TICAM1/TRIF. Functionally, RNA-directed RNA polymerase 3D-POL replicates genomic and antigenomic RNA by recognizing replications specific signals. The chain is Genome polyprotein from Human hepatitis A virus genotype IIB (isolate SLF88) (HHAV).